A 59-amino-acid chain; its full sequence is Protein translocase subunit SecE (59 aa).

The helical transmembrane segment at 33–53 threads the bilayer; the sequence is GAGIALVGLLGFIIFAVMTFV.

It belongs to the SecE/SEC61-gamma family. As to quaternary structure, component of the Sec protein translocase complex. Heterotrimer consisting of SecY (alpha), SecG (beta) and SecE (gamma) subunits. The heterotrimers can form oligomers, although 1 heterotrimer is thought to be able to translocate proteins. Interacts with the ribosome. May interact with SecDF, and other proteins may be involved.

Its subcellular location is the cell membrane. In terms of biological role, essential subunit of the Sec protein translocation channel SecYEG. Clamps together the 2 halves of SecY. May contact the channel plug during translocation. The sequence is that of Protein translocase subunit SecE from Haloarcula marismortui (strain ATCC 43049 / DSM 3752 / JCM 8966 / VKM B-1809) (Halobacterium marismortui).